Here is a 228-residue protein sequence, read N- to C-terminus: Cytidylate kinase (228 aa).

12-20 (GPSGAGKGT) contacts ATP.

This sequence belongs to the cytidylate kinase family. Type 1 subfamily.

The protein localises to the cytoplasm. The enzyme catalyses CMP + ATP = CDP + ADP. It catalyses the reaction dCMP + ATP = dCDP + ADP. In Photobacterium profundum (strain SS9), this protein is Cytidylate kinase.